The chain runs to 109 residues: Oncomodulin (109 aa).

The residue at position 2 (serine 2) is an N-acetylserine. EF-hand domains are found at residues 39–74 (MSAS…FQSD) and 78–109 (LTES…MVHS). Residues aspartate 52, aspartate 54, serine 56, tyrosine 58, glutamate 63, aspartate 91, aspartate 93, aspartate 95, lysine 97, and glutamate 102 each contribute to the Ca(2+) site.

It belongs to the parvalbumin family. In terms of tissue distribution, found in tumor tissues and not detected in normal tissues.

Its function is as follows. Has some calmodulin-like activity with respect to enzyme activation and growth regulation. Binds two calcium ions. This chain is Oncomodulin (Ocm), found in Rattus norvegicus (Rat).